Reading from the N-terminus, the 776-residue chain is ADP-ribosylation factor GTPase-activating protein AGD2 (776 aa).

In terms of domain architecture, BAR spans 2–226; it reads AGFINLEDSP…IHQVLTYAQQ (225 aa). The interval 248 to 267 is disordered; that stretch reads QSELDSQQASAKADPSDVGG. The region spanning 290 to 421 is the PH domain; sequence EVTKQGYLLK…WVNKITAAIT (132 aa). The Arf-GAP domain maps to 467–604; that stretch reads DDVLTILREI…ALVVKDEREA (138 aa). The C4-type zinc-finger motif lies at 482 to 505; it reads CAECNAPDPDWASLNLGVLMCIEC. ANK repeat units lie at residues 683-712 and 716-745; these read QGCS…DINM and HGRT…RPSI.

As to expression, expressed in roots, hypocotyls, cotyledons, leaf and shoot apical meristems and siliques.

Its function is as follows. Probable GTPase-activating protein. The polypeptide is ADP-ribosylation factor GTPase-activating protein AGD2 (AGD2) (Arabidopsis thaliana (Mouse-ear cress)).